Reading from the N-terminus, the 113-residue chain is Large ribosomal subunit protein uL22 (113 aa).

Belongs to the universal ribosomal protein uL22 family. Part of the 50S ribosomal subunit.

This protein binds specifically to 23S rRNA; its binding is stimulated by other ribosomal proteins, e.g. L4, L17, and L20. It is important during the early stages of 50S assembly. It makes multiple contacts with different domains of the 23S rRNA in the assembled 50S subunit and ribosome. Its function is as follows. The globular domain of the protein is located near the polypeptide exit tunnel on the outside of the subunit, while an extended beta-hairpin is found that lines the wall of the exit tunnel in the center of the 70S ribosome. This is Large ribosomal subunit protein uL22 from Stenotrophomonas maltophilia (strain K279a).